Here is a 237-residue protein sequence, read N- to C-terminus: MSQLNVDLQEIAKFEALAAKWWDQHSEFRPLHQINPLRLNWIDERAGGLAGKKVLDVGCGGGILAESMARRGADVLGIDMGEAPLAVGRLHAQQENVQNIEYRQIPVEELAQEQAGQYDVVTCMEMMEHVPDPASIVKACQTLVKPGGHVFFSTINRNPKSYLFAIIGAEYVLRMLPKGTHDYHKFIRPSEMAHDIRNAGLTLKEMTGLHYNPITKRYWLAPNVDVNYMVHTVKTGA.

The S-adenosyl-L-methionine site is built by Arg-38, Gly-58, Asp-79, and Met-124.

Belongs to the methyltransferase superfamily. UbiG/COQ3 family.

The enzyme catalyses a 3-demethylubiquinol + S-adenosyl-L-methionine = a ubiquinol + S-adenosyl-L-homocysteine + H(+). It catalyses the reaction a 3-(all-trans-polyprenyl)benzene-1,2-diol + S-adenosyl-L-methionine = a 2-methoxy-6-(all-trans-polyprenyl)phenol + S-adenosyl-L-homocysteine + H(+). It functions in the pathway cofactor biosynthesis; ubiquinone biosynthesis. Its function is as follows. O-methyltransferase that catalyzes the 2 O-methylation steps in the ubiquinone biosynthetic pathway. The polypeptide is Ubiquinone biosynthesis O-methyltransferase (Acinetobacter baumannii (strain AB307-0294)).